The primary structure comprises 492 residues: N-succinylglutamate 5-semialdehyde dehydrogenase (492 aa).

Gly-220–Gly-225 provides a ligand contact to NAD(+). Residues Glu-243 and Cys-277 contribute to the active site.

This sequence belongs to the aldehyde dehydrogenase family. AstD subfamily.

The catalysed reaction is N-succinyl-L-glutamate 5-semialdehyde + NAD(+) + H2O = N-succinyl-L-glutamate + NADH + 2 H(+). The protein operates within amino-acid degradation; L-arginine degradation via AST pathway; L-glutamate and succinate from L-arginine: step 4/5. Functionally, catalyzes the NAD-dependent reduction of succinylglutamate semialdehyde into succinylglutamate. The polypeptide is N-succinylglutamate 5-semialdehyde dehydrogenase (Salmonella enteritidis PT4 (strain P125109)).